Consider the following 84-residue polypeptide: Small ribosomal subunit protein eS27 (84 aa).

The segment at 38–60 (CPKCGATTTTFSHAHRQILCQKC) adopts a C4-type zinc-finger fold.

Belongs to the eukaryotic ribosomal protein eS27 family. In terms of assembly, component of the small ribosomal subunit. The cofactor is Zn(2+).

Its subcellular location is the cytoplasm. Component of the small ribosomal subunit. The ribosome is a large ribonucleoprotein complex responsible for the synthesis of proteins in the cell. Required for proper rRNA processing and maturation of 18S rRNAs. In Entamoeba histolytica (strain ATCC 30459 / HM-1:IMSS / ABRM), this protein is Small ribosomal subunit protein eS27 (RPS27).